The following is a 670-amino-acid chain: DNA ligase (670 aa).

NAD(+) contacts are provided by residues 34-38 (DFEFD), 83-84 (SL), and Glu-113. Catalysis depends on Lys-115, which acts as the N6-AMP-lysine intermediate. Positions 136, 173, 288, and 312 each coordinate NAD(+). Zn(2+)-binding residues include Cys-406, Cys-409, Cys-424, and Cys-430. In terms of domain architecture, BRCT spans 591-670 (PESDKFAGKS…EAEFISLLNS (80 aa)).

This sequence belongs to the NAD-dependent DNA ligase family. LigA subfamily. Mg(2+) is required as a cofactor. Requires Mn(2+) as cofactor.

The enzyme catalyses NAD(+) + (deoxyribonucleotide)n-3'-hydroxyl + 5'-phospho-(deoxyribonucleotide)m = (deoxyribonucleotide)n+m + AMP + beta-nicotinamide D-nucleotide.. Functionally, DNA ligase that catalyzes the formation of phosphodiester linkages between 5'-phosphoryl and 3'-hydroxyl groups in double-stranded DNA using NAD as a coenzyme and as the energy source for the reaction. It is essential for DNA replication and repair of damaged DNA. The sequence is that of DNA ligase from Cytophaga hutchinsonii (strain ATCC 33406 / DSM 1761 / CIP 103989 / NBRC 15051 / NCIMB 9469 / D465).